A 359-amino-acid chain; its full sequence is NAC domain-containing protein 45 (359 aa).

Positions 19-185 (LPPGFRFHPT…EWVVCKVFHK (167 aa)) constitute an NAC domain. A DNA-binding region spans residues 130-191 (VGMKKTLVFY…VFHKKGDDRE (62 aa)).

In terms of tissue distribution, expressed in roots. Expressed at low levels in leaves, stems and panicles.

It is found in the nucleus. Transcription activator involved in responses to drought stress and salt stress. Transactivates the stress response genes LEA19 and PM19L. This chain is NAC domain-containing protein 45, found in Oryza sativa subsp. japonica (Rice).